Consider the following 492-residue polypeptide: Argininosuccinate lyase (492 aa).

Belongs to the lyase 1 family. Argininosuccinate lyase subfamily.

It is found in the cytoplasm. The catalysed reaction is 2-(N(omega)-L-arginino)succinate = fumarate + L-arginine. Its pathway is amino-acid biosynthesis; L-arginine biosynthesis; L-arginine from L-ornithine and carbamoyl phosphate: step 3/3. The chain is Argininosuccinate lyase from Methanoculleus marisnigri (strain ATCC 35101 / DSM 1498 / JR1).